A 141-amino-acid polypeptide reads, in one-letter code: Antifungal protein ginkbilobin-like protein 1 (141 aa).

The first 32 residues, 1-32 (MSISSKFQLRSSTSLLLLVALMVVMGMDGAAA), serve as a signal peptide directing secretion. The Gnk2-homologous domain maps to 36-141 (TNFVSSACNT…CFIQYEQHSF (106 aa)). 3 disulfides stabilise this stretch: Cys43/Cys119, Cys95/Cys104, and Cys107/Cys132. Asn44 provides a ligand contact to alpha-D-mannopyranose. Alpha-D-mannopyranose is bound by residues Arg126 and Glu137.

Functionally, exerts antifungal activity through its carbohydrate-binding specificity. The protein is Antifungal protein ginkbilobin-like protein 1 of Picea glauca (White spruce).